Consider the following 486-residue polypeptide: Glycogen synthase (486 aa).

Residue Lys-20 coordinates ADP-alpha-D-glucose.

This sequence belongs to the glycosyltransferase 1 family. Bacterial/plant glycogen synthase subfamily.

It catalyses the reaction [(1-&gt;4)-alpha-D-glucosyl](n) + ADP-alpha-D-glucose = [(1-&gt;4)-alpha-D-glucosyl](n+1) + ADP + H(+). Its pathway is glycan biosynthesis; glycogen biosynthesis. Functionally, synthesizes alpha-1,4-glucan chains using ADP-glucose. This is Glycogen synthase from Aeromonas salmonicida (strain A449).